Here is a 261-residue protein sequence, read N- to C-terminus: Metallo-beta-lactamase fold-containing protein ST1585 (261 aa).

The Zn(2+) site is built by histidine 58, histidine 60, aspartate 62, histidine 63, histidine 148, aspartate 165, and histidine 207.

This sequence belongs to the metallo-beta-lactamase superfamily. In terms of assembly, monomer.

In Sulfurisphaera tokodaii (strain DSM 16993 / JCM 10545 / NBRC 100140 / 7) (Sulfolobus tokodaii), this protein is Metallo-beta-lactamase fold-containing protein ST1585.